The chain runs to 640 residues: Threonine--tRNA ligase (640 aa).

Residues 1-61 enclose the TGS domain; sequence MPTITLPDGS…THDATLQIIT (61 aa). Residues 242-533 are catalytic; that stretch reads DHRKIGKQLD…LIEHYAGVFP (292 aa). Zn(2+) is bound by residues Cys333, His384, and His510.

Belongs to the class-II aminoacyl-tRNA synthetase family. Homodimer. Requires Zn(2+) as cofactor.

The protein resides in the cytoplasm. It catalyses the reaction tRNA(Thr) + L-threonine + ATP = L-threonyl-tRNA(Thr) + AMP + diphosphate + H(+). Functionally, catalyzes the attachment of threonine to tRNA(Thr) in a two-step reaction: L-threonine is first activated by ATP to form Thr-AMP and then transferred to the acceptor end of tRNA(Thr). Also edits incorrectly charged L-seryl-tRNA(Thr). This is Threonine--tRNA ligase from Pseudomonas putida (strain W619).